The primary structure comprises 5085 residues: Protein piccolo (5085 aa).

The span at 1–20 (MGNEASLEGEGLPEGLAAAA) shows a compositional bias: low complexity. Disordered regions lie at residues 1-142 (MGNE…DFKE) and 173-516 (DLIS…TPAQ). Over residues 92-101 (PGKPPDPGRP) the composition is skewed to pro residues. 3 stretches are compositionally biased toward basic and acidic residues: residues 110–121 (RTTDTFRSEQKL), 132–142 (KESKSRTDFKE), and 184–198 (ETTK…EQGK). A phosphoserine mark is found at serine 211 and serine 231. Polar residues predominate over residues 227–240 (QQDSSPKSVSSQQA). The segment covering 253–268 (PSQQSPAQTPAQQASP) has biased composition (low complexity). Composition is skewed to polar residues over residues 275–285 (QPGSAKATVQQ), 318–332 (KTSS…SLAQ), and 375–391 (TPAQ…QQPG). A 12 X 10 AA tandem approximate repeats of P-A-K-P-Q-P-Q-Q-P-X region spans residues 372–491 (PTKTPAQQSG…LAKPSAQQPT (120 aa)). Positions 392–408 (PTKPSPQQPIPAKPQPQ) are enriched in pro residues. The span at 409-423 (QPVATKTQPQQSAPA) shows a compositional bias: low complexity. Pro residues predominate over residues 424-472 (KPQPQQPAPAKPQPQQPTPAKPQPQPPTPAKPQPQPPTATKPQPQPPTA). The span at 486–499 (SAQQPTKSISQTVT) shows a compositional bias: polar residues. The C4-type zinc finger occupies 523 to 547 (CPLCNTTELLLHIPEKANFNTCTEC). 5 disordered regions span residues 586–880 (AAIP…TVTG), 896–1012 (LIST…ACPL), 1069–1357 (QLGD…PSDL), 1373–1604 (STLV…EELV), and 1622–1815 (TIAD…SDPE). Low complexity predominate over residues 596–613 (PKAATAPTATASKSPVPS). Over residues 618-654 (PKKEPPSKQDSPKALESKKPPEPKKPPEPKKPPEPKK) the composition is skewed to basic and acidic residues. Low complexity predominate over residues 672-682 (APQLPVAEALP). Pro residues predominate over residues 683-693 (EPAPPKEPSGP). Over residues 705-717 (VEPKQPKMTETRA) the composition is skewed to basic and acidic residues. Residues 718–767 (DIQSSSTTKPDILSSQVQSQAQVKTASPLKTDSAKPSQSFPPTGEKTTPL) show a composition bias toward polar residues. The span at 790–808 (ESKDPKHIDPIQKKDEPKK) shows a compositional bias: basic and acidic residues. Residues serine 857 and serine 869 each carry the phosphoserine modification. Polar residues-rich tracts occupy residues 867–878 (PKSQPTTPQETV), 896–906 (LISTAGQQGPH), and 917–936 (QAPT…STGQ). Threonine 873 bears the Phosphothreonine mark. A compositionally biased stretch (basic and acidic residues) spans 990-1004 (EPEKAVPAHKPDKTT). The segment at 1010–1033 (CPLCRTELNLGSQEPPNFNTCTEC) adopts a C4-type zinc-finger fold. Pro residues predominate over residues 1077–1092 (PPAPSGPKASPMPAPA). Over residues 1110–1129 (KEAEGKTEAEKPVPEKETAS) the composition is skewed to basic and acidic residues. Threonine 1133 carries the post-translational modification Phosphothreonine. Composition is skewed to basic and acidic residues over residues 1141–1150 (QKLEESEGKK), 1157–1199 (PEKK…KLPP), and 1274–1295 (SSKD…DKSD). The span at 1300–1318 (QQPKSPQGLSDTGYSSDGI) shows a compositional bias: polar residues. Phosphoserine occurs at positions 1304, 1314, 1315, 1344, 1346, 1349, 1350, and 1353. Over residues 1331–1345 (SDEKDLLKGLKKDSF) the composition is skewed to basic and acidic residues. The segment covering 1346-1355 (SQESSPSSPS) has biased composition (low complexity). Basic and acidic residues predominate over residues 1378–1396 (EKAEKKTQPQKISPEKPQD). Polar residues predominate over residues 1397 to 1407 (QQKTQTASETL). A compositionally biased stretch (basic and acidic residues) spans 1417–1456 (KESQEKKVSPKKDSEQGFPSRKEHKEKPELVDDLSPRRAS). Residues serine 1451, serine 1463, serine 1464, serine 1466, serine 1469, serine 1493, serine 1496, serine 1517, and serine 1519 each carry the phosphoserine modification. Positions 1511–1523 (SADEDASGSEDEE) are enriched in acidic residues. At threonine 1564 the chain carries Phosphothreonine. Residues serine 1565, serine 1575, and serine 1587 each carry the phosphoserine modification. Positions 1578-1587 (DEDDETFDES) are enriched in acidic residues. A compositionally biased stretch (basic and acidic residues) spans 1588–1599 (PELKFRETKSQE). A compositionally biased stretch (polar residues) spans 1622–1635 (TIADKYSSESSQKK). Residues 1640–1650 (FDEEPELEMES) show a composition bias toward acidic residues. The residue at position 1650 (serine 1650) is a Phosphoserine. Residue threonine 1652 is modified to Phosphothreonine. Residues serine 1654 and serine 1659 each carry the phosphoserine modification. Over residues 1662-1679 (EGSSSLHASSFTPGTSPT) the composition is skewed to polar residues. The span at 1719–1732 (DSSEEEELREEEEL) shows a compositional bias: acidic residues. 2 positions are modified to phosphoserine: serine 1720 and serine 1721. Basic and acidic residues predominate over residues 1733–1746 (LKEQEKQRELEQQQ). Threonine 1772 bears the Phosphothreonine mark. At serine 1778 the chain carries Phosphoserine. The span at 1787–1802 (EELRQAAEMEELHRSS) shows a compositional bias: basic and acidic residues. 4 positions are modified to phosphoserine: serine 1807, serine 1812, serine 1820, and serine 1841. Disordered stretches follow at residues 2116–2139 (PSES…SSVC), 2275–2385 (ELTK…PTYP), and 2456–2486 (KPPI…TGLS). Residues 2121-2139 (TSVPPSDTPSLTSSISSVC) are compositionally biased toward low complexity. Over residues 2350-2384 (QPPPPPPPPPPSPSTSSPPPTPPLPPATSPKPPTY) the composition is skewed to pro residues. Serine 2511 bears the Phosphoserine mark. An O-linked (GlcNAc) threonine glycan is attached at threonine 2702. O-linked (GlcNAc) serine glycosylation occurs at serine 2976. Phosphothreonine is present on threonine 3014. Disordered regions lie at residues 3350 to 3457 (KEEK…PLSK) and 3503 to 3572 (KTYK…LYSP). Position 3374 is a phosphoserine (serine 3374). The segment covering 3377–3386 (DDPRNLKKIV) has biased composition (basic and acidic residues). Serine 3388 bears the Phosphoserine mark. Threonine 3392 and threonine 3419 each carry phosphothreonine. Positions 3419–3428 (TDDEDQDEWD) are enriched in acidic residues. Residues 3511–3523 (GCQTETDSDTQSP) show a composition bias toward polar residues. Residues serine 3522, serine 3530, serine 3561, serine 3565, serine 3571, serine 3574, serine 3577, serine 3598, serine 3624, serine 3626, and serine 3632 each carry the phosphoserine modification. Disordered regions lie at residues 3602-3695 (VLHP…ASRR) and 3774-3816 (AEDR…FIPP). Polar residues-rich tracts occupy residues 3647 to 3663 (EGFT…SGTQ) and 3679 to 3691 (STGT…TMGT). Serine 3781 carries the post-translational modification Phosphoserine. Residues 3791–3803 (SRVESQHGVERPR) show a composition bias toward basic and acidic residues. Residues 3805–3816 (APQTEFSQFIPP) show a composition bias toward polar residues. Phosphoserine occurs at positions 4034 and 4150. Disordered regions lie at residues 4225–4248 (ADKP…YGLD) and 4272–4291 (VSFG…LPIS). Low complexity predominate over residues 4228 to 4248 (PYSSGSRSRPSSRPSSVYGLD). The segment covering 4275–4291 (GHSSSSARTKPTSLPIS) has biased composition (polar residues). Serine 4304, serine 4308, serine 4311, serine 4340, and serine 4376 each carry phosphoserine. The disordered stretch occupies residues 4335 to 4357 (RDQFGSSHSLPEVQQHMREESRT). One can recognise a PDZ domain in the interval 4442-4536 (RVKITRDFKD…EAEICVRLDL (95 aa)). The interval 4589–4638 (VEKGSHAHSGPTSAGSSSVPSPGQPGSPSVSKKKHSSTKPTDGPKAASHP) is disordered. The span at 4595 to 4618 (AHSGPTSAGSSSVPSPGQPGSPSV) shows a compositional bias: low complexity. The residue at position 4609 (serine 4609) is a Phosphoserine. Residues 4639–4768 (ITGEIQLQIN…SHLDNTPRWY (130 aa)) enclose the C2 1 domain. Ca(2+)-binding residues include aspartate 4668 and aspartate 4674. Serine 4723 carries the post-translational modification Phosphoserine. The Ca(2+) site is built by aspartate 4738, aspartate 4740, serine 4743, and aspartate 4746. 2 disordered regions span residues 4775-4851 (ESID…SVAQ) and 4874-4908 (QPTK…SEGS). Composition is skewed to low complexity over residues 4783–4795 (HSSQ…PKPS) and 4822–4832 (SSPGSSKSSSE). The segment covering 4840–4851 (PSRSQSKTSVAQ) has biased composition (polar residues). Residues 4886-4908 (SSVSTGSSGSSVGSGYSVDSEGS) are compositionally biased toward low complexity. In terms of domain architecture, C2 2 spans 4950–5075 (VMGEIKLALK…DLRKRIVNWH (126 aa)).

Interacts with BSN, ERC2/CAST1, RIMS1 and UNC13A. Interacts (via C-terminus) with TRIO (via N-terminus). Interacts with CTBP1. Interacts with SIAH1; this interaction negatively regulates SIAH1 E3 ligase activity. Directly interacts with GIT1 and GIT2. Ca(2+) serves as cofactor. In terms of tissue distribution, expressed in brain (at protein level).

The protein resides in the presynaptic active zone. Functionally, scaffold protein of the presynaptic cytomatrix at the active zone (CAZ) which is the place in the synapse where neurotransmitter is released. After synthesis, participates in the formation of Golgi-derived membranous organelles termed Piccolo-Bassoon transport vesicles (PTVs) that are transported along axons to sites of nascent synaptic contacts. At the presynaptic active zone, regulates the spatial organization of synaptic vesicle cluster, the protein complexes that execute membrane fusion and compensatory endocytosis. Organizes as well the readily releasable pool of synaptic vesicles and safeguards a fraction of them to be not immediately available for action potential-induced release. Also functions in processes other than assembly such as the regulation of specific presynaptic protein ubiquitination by interacting with SIAH1 or the regulation of presynaptic autophagy. Also mediates synapse to nucleus communication leading to reconfiguration of gene expression by associating with the transcriptional corepressor CTBP1 and by subsequently reducing the size of its pool available for nuclear import. The chain is Protein piccolo (Pclo) from Rattus norvegicus (Rat).